Reading from the N-terminus, the 122-residue chain is Large ribosomal subunit protein uL14c (122 aa).

Belongs to the universal ribosomal protein uL14 family. As to quaternary structure, part of the 50S ribosomal subunit.

The protein resides in the plastid. It is found in the chloroplast. Binds to 23S rRNA. The polypeptide is Large ribosomal subunit protein uL14c (Manihot esculenta (Cassava)).